The following is a 398-amino-acid chain: MGVLSAADPPPVSAIGFEGYEKRLEITFSEAPVFADPDGRGLRALSRAQIDSVLDLARCTIVSELSNKDFDSYVLSESSLFIYSDKIVIKTCGTTKLLLTIPRILELAEGLSMPLAAVKYSRGMFIFPSAQPAPHRSFSEEVAVLNRYFGHLKSGGNAYVIGDPAKPGQKWHIYYATQHPEQPMVTLEMCMTGLDKEKASVFFKTSADGHTSCAKEMTKLSGISDIIPEMEICDFDFEPCGYSMNAIHGSAFSTIHVTPEDGFSYASYEVVGFDASTLAYGDLVKRVLRCFGPSEFSVAVTIFGGHGHAGTWAKELNADAYKCNNMVEQELPCGGLLIYQSFDATEDVPVAVGSPKSVLHCFEAENMVNPAPVKEGKLGNLLPWGEDALEENDGVFDE.

Active-site residues include Glu-18 and Glu-21. Residue Ser-78 is the Schiff-base intermediate with substrate; via pyruvic acid of the active site. Position 78 is a pyruvic acid (Ser); by autocatalysis (Ser-78). The active-site Proton donor; for catalytic activity is Cys-92. Active-site proton acceptor; for processing activity residues include Ser-243 and His-256.

The protein belongs to the eukaryotic AdoMetDC family. Requires pyruvate as cofactor. Post-translationally, is synthesized initially as an inactive proenzyme. Formation of the active enzyme involves a self-maturation process in which the active site pyruvoyl group is generated from an internal serine residue via an autocatalytic post-translational modification. Two non-identical subunits are generated from the proenzyme in this reaction, and the pyruvate is formed at the N-terminus of the alpha chain, which is derived from the carboxyl end of the proenzyme. The post-translation cleavage follows an unusual pathway, termed non-hydrolytic serinolysis, in which the side chain hydroxyl group of the serine supplies its oxygen atom to form the C-terminus of the beta chain, while the remainder of the serine residue undergoes an oxidative deamination to produce ammonia and the pyruvoyl group blocking the N-terminus of the alpha chain.

It carries out the reaction S-adenosyl-L-methionine + H(+) = S-adenosyl 3-(methylsulfanyl)propylamine + CO2. Its pathway is amine and polyamine biosynthesis; S-adenosylmethioninamine biosynthesis; S-adenosylmethioninamine from S-adenosyl-L-methionine: step 1/1. This is S-adenosylmethionine decarboxylase proenzyme (SAMDC) from Oryza sativa subsp. japonica (Rice).